The sequence spans 323 residues: tRNA dimethylallyltransferase (323 aa).

12–19 (GPTAAGKT) contacts ATP. Residue 14 to 19 (TAAGKT) participates in substrate binding. Interaction with substrate tRNA regions lie at residues 37–40 (DSAL) and 161–165 (QRLIR).

Belongs to the IPP transferase family. In terms of assembly, monomer. It depends on Mg(2+) as a cofactor.

It carries out the reaction adenosine(37) in tRNA + dimethylallyl diphosphate = N(6)-dimethylallyladenosine(37) in tRNA + diphosphate. Catalyzes the transfer of a dimethylallyl group onto the adenine at position 37 in tRNAs that read codons beginning with uridine, leading to the formation of N6-(dimethylallyl)adenosine (i(6)A). The chain is tRNA dimethylallyltransferase from Pseudomonas entomophila (strain L48).